The following is a 261-amino-acid chain: Triosephosphate isomerase (261 aa).

10-12 is a substrate binding site; the sequence is NWK. H100 acts as the Electrophile in catalysis. E172 (proton acceptor) is an active-site residue. Substrate-binding positions include G178, S218, and 239–240; that span reads GG.

Belongs to the triosephosphate isomerase family. As to quaternary structure, homodimer.

The protein localises to the cytoplasm. The enzyme catalyses D-glyceraldehyde 3-phosphate = dihydroxyacetone phosphate. The protein operates within carbohydrate biosynthesis; gluconeogenesis. It participates in carbohydrate degradation; glycolysis; D-glyceraldehyde 3-phosphate from glycerone phosphate: step 1/1. Functionally, involved in the gluconeogenesis. Catalyzes stereospecifically the conversion of dihydroxyacetone phosphate (DHAP) to D-glyceraldehyde-3-phosphate (G3P). The chain is Triosephosphate isomerase from Mycolicibacterium vanbaalenii (strain DSM 7251 / JCM 13017 / BCRC 16820 / KCTC 9966 / NRRL B-24157 / PYR-1) (Mycobacterium vanbaalenii).